Consider the following 393-residue polypeptide: tRNA(Met) cytidine acetate ligase (393 aa).

Residues Gly81, Asn142, and Arg167 each contribute to the ATP site.

This sequence belongs to the TmcAL family.

It localises to the cytoplasm. The enzyme catalyses cytidine(34) in elongator tRNA(Met) + acetate + ATP = N(4)-acetylcytidine(34) in elongator tRNA(Met) + AMP + diphosphate. In terms of biological role, catalyzes the formation of N(4)-acetylcytidine (ac(4)C) at the wobble position of elongator tRNA(Met), using acetate and ATP as substrates. First activates an acetate ion to form acetyladenylate (Ac-AMP) and then transfers the acetyl group to tRNA to form ac(4)C34. This is tRNA(Met) cytidine acetate ligase from Bacillus thuringiensis (strain Al Hakam).